A 188-amino-acid polypeptide reads, in one-letter code: dCTP deaminase (188 aa).

Residues 111-116 (KSTYAR), 135-137 (TLE), Gln-156, Tyr-170, and Gln-180 each bind dCTP. The active-site Proton donor/acceptor is the Glu-137.

It belongs to the dCTP deaminase family. As to quaternary structure, homotrimer.

It carries out the reaction dCTP + H2O + H(+) = dUTP + NH4(+). The protein operates within pyrimidine metabolism; dUMP biosynthesis; dUMP from dCTP (dUTP route): step 1/2. In terms of biological role, catalyzes the deamination of dCTP to dUTP. The chain is dCTP deaminase from Francisella tularensis subsp. tularensis (strain FSC 198).